The sequence spans 155 residues: Transcription antitermination protein NusB (155 aa).

This sequence belongs to the NusB family.

Functionally, involved in transcription antitermination. Required for transcription of ribosomal RNA (rRNA) genes. Binds specifically to the boxA antiterminator sequence of the ribosomal RNA (rrn) operons. This Ralstonia nicotianae (strain ATCC BAA-1114 / GMI1000) (Ralstonia solanacearum) protein is Transcription antitermination protein NusB.